The following is a 203-amino-acid chain: Large ribosomal subunit protein uL13 (203 aa).

A2 is modified (N-acetylalanine). R59 is modified (citrulline). S77 is subject to Phosphoserine. R140 carries the post-translational modification Citrulline. Residue K191 is modified to N6-acetyllysine.

Belongs to the universal ribosomal protein uL13 family. In terms of assembly, component of the 60S ribosome. Component of the GAIT complex. Interacts with EIF4G1. In terms of processing, phosphorylation at Ser-77 upon interferon-gamma treatment in macrophages involves a DAPK1-DAPK3 kinase cascade and is causing release from the ribosome, association with the GAIT complex and subsequent involvement in transcript-selective translation inhibition. Citrullinated by PADI4.

Its subcellular location is the cytoplasm. Functionally, associated with ribosomes but is not required for canonical ribosome function and has extra-ribosomal functions. Component of the GAIT (gamma interferon-activated inhibitor of translation) complex which mediates interferon-gamma-induced transcript-selective translation inhibition in inflammation processes. Upon interferon-gamma activation and subsequent phosphorylation dissociates from the ribosome and assembles into the GAIT complex which binds to stem loop-containing GAIT elements in the 3'-UTR of diverse inflammatory mRNAs (such as ceruplasmin) and suppresses their translation. In the GAIT complex interacts with m7G cap-bound eIF4G at or near the eIF3-binding site and blocks the recruitment of the 43S ribosomal complex. Involved in methylation of rRNA. The sequence is that of Large ribosomal subunit protein uL13 (RPL13A) from Canis lupus familiaris (Dog).